A 514-amino-acid chain; its full sequence is Vacuolar aminopeptidase 1 (514 aa).

A propeptide spans 1 to 45 (required for vacuolar localization. Mediates aggregation and vesicle formation in Cvt pathway); it reads MEEQREILEQLKKTLQMLTVEPSKNNQIANEEKEKKENENSWCIL. 2 N-linked (GlcNAc...) asparagine glycosylation sites follow: Asn-107 and Asn-110. His-132 serves as a coordination point for Zn(2+). His-210 lines the substrate pocket. Zn(2+) is bound by residues Asp-303, Glu-339, and Glu-340. Glu-339 contributes to the substrate binding site. Ser-356 carries the phosphoserine modification. Zn(2+) is bound at residue Asp-385. Substrate-binding residues include Asp-385 and His-388. A glycan (N-linked (GlcNAc...) asparagine) is linked at Asn-448. His-479 contributes to the Zn(2+) binding site.

This sequence belongs to the peptidase M18 family. Homododecamer. The precursor form of aminopeptidase 1 (prApe1) assembles into dodecamers and further aggregates into higher multimers (the Ape1 complex) in the cytoplasm. The Ape1 complex is disaggregated in the vacuolar lumen, but mature aminopeptidase 1 (mApe1) retains its dodecameric form. Dodecamer assembly in the cytoplasm is essential for formation of an enzymatically active complex. If cytoplasmic homododecamerization of prApe1 is disturbed in mutants, homododecamers of mApe1 will form in the vacuole, but they are enzymatically inactive. Interacts with ATG19. Zn(2+) serves as cofactor. Post-translationally, synthesized in a precursor form (prApe1) that has an amino-terminal propeptide. The N-terminal extension of the 61 kDa precursor is proteolytically processed in two sequential steps. The first step involves proteinase A (PrA/PEP4) and produces a 55 kDa unstable intermediate (iAPI). The second step involves proteinase B (PrB/PRB1) and converts iAPI into the 50 kDa stable, mature enzyme (mApe1).

The protein resides in the vacuole. The enzyme catalyses Release of an N-terminal amino acid, preferably a neutral or hydrophobic one, from a polypeptide. Aminoacyl-arylamides are poor substrates.. With respect to regulation, strongly and specifically activated by Cl(-) and Br(-), which act as positive allosteric effectors. Inactivated by metal-chelating agents. Resident vacuolar enzyme that catalyzes the removal of amino acids from the N-terminus of peptides and proteins. Also acts as the major cargo protein of the cytoplasm-to-vacuole targeting (Cvt) pathway. The precursor form of aminopeptidase 1 (prApe1) assembles into dodecamers and the propeptide mediates the aggregation of dodecamers into higher multimers. The multimers are then recognized via the propeptide by their receptor ATG19, and ATG19 further interacts with ATG11, which tethers the APE1-ATG19 complex to the pre-autophagosomal structure (PAS). The cargo-receptor complex (also Cvt complex) is selectively enwrapped by a double-membrane structure termed the Cvt vesicle under vegetative growth conditions and by a similar but larger double-membrane structure termed the autophagosome under nitrogen starvation conditions. The Cvt vesicle or the autophagosome fuses with the vacuolar membrane and release its content in the vacuolar lumen. In the vacuole, prApe1 is processed into mature aminopeptidase 1 (mApe1). The sequence is that of Vacuolar aminopeptidase 1 from Saccharomyces cerevisiae (strain ATCC 204508 / S288c) (Baker's yeast).